A 394-amino-acid chain; its full sequence is Elongation factor Tu (394 aa).

A tr-type G domain is found at 10–205; the sequence is KPHMNVGTIG…TMDNYFDLPQ (196 aa). Residues 19-26 are G1; sequence GHVDHGKT. Residue 19-26 participates in GTP binding; that stretch reads GHVDHGKT. Thr-26 provides a ligand contact to Mg(2+). The G2 stretch occupies residues 61–65; sequence GITIN. Residues 82-85 form a G3 region; the sequence is DCPG. GTP-binding positions include 82 to 86 and 137 to 140; these read DCPGH and NKLD. Residues 137-140 are G4; that stretch reads NKLD. The G5 stretch occupies residues 173-175; that stretch reads SAF.

The protein belongs to the TRAFAC class translation factor GTPase superfamily. Classic translation factor GTPase family. EF-Tu/EF-1A subfamily. In terms of assembly, monomer.

The protein localises to the cytoplasm. The catalysed reaction is GTP + H2O = GDP + phosphate + H(+). Its function is as follows. GTP hydrolase that promotes the GTP-dependent binding of aminoacyl-tRNA to the A-site of ribosomes during protein biosynthesis. This is Elongation factor Tu from Borrelia turicatae (strain 91E135).